The chain runs to 443 residues: Xaa-Pro dipeptidase (443 aa).

Mn(2+) is bound by residues Asp246, Asp257, His339, Glu384, and Glu423.

Belongs to the peptidase M24B family. Bacterial-type prolidase subfamily. Mn(2+) serves as cofactor.

The enzyme catalyses Xaa-L-Pro dipeptide + H2O = an L-alpha-amino acid + L-proline. In terms of biological role, splits dipeptides with a prolyl residue in the C-terminal position. The polypeptide is Xaa-Pro dipeptidase (Klebsiella pneumoniae (strain 342)).